Reading from the N-terminus, the 155-residue chain is Ribonuclease H (155 aa).

An RNase H type-1 domain is found at 7–150 (AQNAVDLYTD…ADKLACKGRD (144 aa)). Positions 16, 54, 77, and 142 each coordinate Mg(2+).

This sequence belongs to the RNase H family. As to quaternary structure, monomer. Mg(2+) is required as a cofactor.

It localises to the cytoplasm. The enzyme catalyses Endonucleolytic cleavage to 5'-phosphomonoester.. Functionally, endonuclease that specifically degrades the RNA of RNA-DNA hybrids. The sequence is that of Ribonuclease H from Saccharopolyspora erythraea (strain ATCC 11635 / DSM 40517 / JCM 4748 / NBRC 13426 / NCIMB 8594 / NRRL 2338).